A 156-amino-acid polypeptide reads, in one-letter code: Small ribosomal subunit protein uS7 (156 aa).

This sequence belongs to the universal ribosomal protein uS7 family. As to quaternary structure, part of the 30S ribosomal subunit. Contacts proteins S9 and S11.

Functionally, one of the primary rRNA binding proteins, it binds directly to 16S rRNA where it nucleates assembly of the head domain of the 30S subunit. Is located at the subunit interface close to the decoding center, probably blocks exit of the E-site tRNA. This is Small ribosomal subunit protein uS7 from Beijerinckia indica subsp. indica (strain ATCC 9039 / DSM 1715 / NCIMB 8712).